The following is a 423-amino-acid chain: Serine hydroxymethyltransferase (423 aa).

(6S)-5,6,7,8-tetrahydrofolate-binding positions include L120 and G124–L126. The residue at position 229 (K229) is an N6-(pyridoxal phosphate)lysine. S353 to F355 is a binding site for (6S)-5,6,7,8-tetrahydrofolate.

It belongs to the SHMT family. In terms of assembly, homodimer. Pyridoxal 5'-phosphate is required as a cofactor.

The protein localises to the cytoplasm. The catalysed reaction is (6R)-5,10-methylene-5,6,7,8-tetrahydrofolate + glycine + H2O = (6S)-5,6,7,8-tetrahydrofolate + L-serine. The protein operates within one-carbon metabolism; tetrahydrofolate interconversion. It participates in amino-acid biosynthesis; glycine biosynthesis; glycine from L-serine: step 1/1. Catalyzes the reversible interconversion of serine and glycine with tetrahydrofolate (THF) serving as the one-carbon carrier. This reaction serves as the major source of one-carbon groups required for the biosynthesis of purines, thymidylate, methionine, and other important biomolecules. Also exhibits THF-independent aldolase activity toward beta-hydroxyamino acids, producing glycine and aldehydes, via a retro-aldol mechanism. In Prochlorococcus marinus subsp. pastoris (strain CCMP1986 / NIES-2087 / MED4), this protein is Serine hydroxymethyltransferase.